A 298-amino-acid chain; its full sequence is MKDFVVITFYKFFDFPDYKERQQPIFNFADEQKIIGTILLAHEGINATIAGTQTALDAMVNFLHQDPRLADLTYKVSTAPKQPFKRLKVKLKQEIVTLGQPNVDPNNTVGTYIDPKDWNDLIQNPDVTLVDTRNDYEVGIGTFKGAINPNTKSFREFPDYVAENLDPQKNAKVAMFCTGGIRCEKATSYLLNQGFQEVYHLKGGILKYLEEIPVAESLWEGECFVFDERVTVKHGLETGHYELCYACGHPIDAEDKTSAAYEIGVSCPYCIEALTPERRSRFEAKWQQRQQMKACQAS.

The region spanning glutamine 123–serine 217 is the Rhodanese domain. Residue cysteine 177 is the Cysteine persulfide intermediate of the active site.

The protein belongs to the TrhO family.

The catalysed reaction is uridine(34) in tRNA + AH2 + O2 = 5-hydroxyuridine(34) in tRNA + A + H2O. Catalyzes oxygen-dependent 5-hydroxyuridine (ho5U) modification at position 34 in tRNAs. This chain is tRNA uridine(34) hydroxylase, found in Picosynechococcus sp. (strain ATCC 27264 / PCC 7002 / PR-6) (Agmenellum quadruplicatum).